The sequence spans 423 residues: UDP-N-acetylglucosamine 1-carboxyvinyltransferase (423 aa).

Residue Lys-22 to Asn-23 participates in phosphoenolpyruvate binding. Position 98 (Arg-98) interacts with UDP-N-acetyl-alpha-D-glucosamine. Cys-122 acts as the Proton donor in catalysis. Cys-122 carries the 2-(S-cysteinyl)pyruvic acid O-phosphothioketal modification. UDP-N-acetyl-alpha-D-glucosamine contacts are provided by residues Arg-127–Gln-131, Asp-311, and Ile-333.

The protein belongs to the EPSP synthase family. MurA subfamily.

It localises to the cytoplasm. The enzyme catalyses phosphoenolpyruvate + UDP-N-acetyl-alpha-D-glucosamine = UDP-N-acetyl-3-O-(1-carboxyvinyl)-alpha-D-glucosamine + phosphate. Its pathway is cell wall biogenesis; peptidoglycan biosynthesis. In terms of biological role, cell wall formation. Adds enolpyruvyl to UDP-N-acetylglucosamine. The protein is UDP-N-acetylglucosamine 1-carboxyvinyltransferase of Stenotrophomonas maltophilia (strain R551-3).